The chain runs to 90 residues: Probable Fe(2+)-trafficking protein (90 aa).

It belongs to the Fe(2+)-trafficking protein family. In terms of assembly, monomer.

Functionally, could be a mediator in iron transactions between iron acquisition and iron-requiring processes, such as synthesis and/or repair of Fe-S clusters in biosynthetic enzymes. The protein is Probable Fe(2+)-trafficking protein of Pectobacterium atrosepticum (strain SCRI 1043 / ATCC BAA-672) (Erwinia carotovora subsp. atroseptica).